A 220-amino-acid polypeptide reads, in one-letter code: Demethylmenaquinone methyltransferase (220 aa).

S-adenosyl-L-methionine is bound by residues threonine 47, aspartate 67, and 93-94; that span reads DA.

This sequence belongs to the class I-like SAM-binding methyltransferase superfamily. MenG/UbiE family.

It carries out the reaction a 2-demethylmenaquinol + S-adenosyl-L-methionine = a menaquinol + S-adenosyl-L-homocysteine + H(+). Its pathway is quinol/quinone metabolism; menaquinone biosynthesis; menaquinol from 1,4-dihydroxy-2-naphthoate: step 2/2. In terms of biological role, methyltransferase required for the conversion of demethylmenaquinol (DMKH2) to menaquinol (MKH2). This chain is Demethylmenaquinone methyltransferase, found in Thermus thermophilus (strain ATCC BAA-163 / DSM 7039 / HB27).